Reading from the N-terminus, the 427-residue chain is MLEIKYVRENIEEVKQALAKRAGKADFEGFARAEKKRRELLQQIEELRHQRNTVSDEIARMKRNKEDAGTSILEMRTVSDEIKTLDKTLAEQDDFIQQFMMAIPNMPHPDVPMGASDADNTLEKKVGTPRSFDFPIKAHWDIGEDLGILDFPRAAKITGARFSLYLGSGAKLERALINFMLDLHTNEHGYTETLPPFIVNRESLLGTGQLPKFEEDLFKIEGQEYYLIPTSEVPMTNIYRDEVLNEENLPIKFTAYTPCFRSEAGSYGKDTRGLIRQHQFNKVELVKYTTPETSYQELESLLANAETVLKRLGLPYQVVTLCSGDLGFSATRTYDIEVWMPGQDKYREISSCSNCEAFQARRANIKFRRAGQKKLEFVHTLNGSGLAVGRTVAAILENFQQPDGSVVIPEVLRPYMGGKETITNETR.

An L-serine-binding site is contributed by 230-232; sequence TSE. 261 to 263 contacts ATP; the sequence is RSE. An L-serine-binding site is contributed by E284. 348-351 serves as a coordination point for ATP; it reads EISS. S384 is a binding site for L-serine.

This sequence belongs to the class-II aminoacyl-tRNA synthetase family. Type-1 seryl-tRNA synthetase subfamily. Homodimer. The tRNA molecule binds across the dimer.

Its subcellular location is the cytoplasm. The enzyme catalyses tRNA(Ser) + L-serine + ATP = L-seryl-tRNA(Ser) + AMP + diphosphate + H(+). It carries out the reaction tRNA(Sec) + L-serine + ATP = L-seryl-tRNA(Sec) + AMP + diphosphate + H(+). Its pathway is aminoacyl-tRNA biosynthesis; selenocysteinyl-tRNA(Sec) biosynthesis; L-seryl-tRNA(Sec) from L-serine and tRNA(Sec): step 1/1. In terms of biological role, catalyzes the attachment of serine to tRNA(Ser). Is also able to aminoacylate tRNA(Sec) with serine, to form the misacylated tRNA L-seryl-tRNA(Sec), which will be further converted into selenocysteinyl-tRNA(Sec). The polypeptide is Serine--tRNA ligase (Desulforapulum autotrophicum (strain ATCC 43914 / DSM 3382 / VKM B-1955 / HRM2) (Desulfobacterium autotrophicum)).